A 176-amino-acid chain; its full sequence is MATILIHNEENTLLESEQEVAAYLENQGVIYEHWDIAKLPNRLSEKYDLTDEEKDEILTVFQKEIESISEKRGYKSQDVISLSDATPNLDDLLQNFQREHHHTDDEVRFIVSGHGIFAIQGKDGVFFDVRLNPGDLISVPPHIRHYFTLQEDRKVVSVRIFVTTEGWVPIYEEETV.

4 residues coordinate Fe(2+): His100, His102, Glu106, and His145. Ni(2+)-binding residues include His100, His102, Glu106, and His145.

Belongs to the acireductone dioxygenase (ARD) family. Monomer. The cofactor is Fe(2+). Ni(2+) is required as a cofactor.

The enzyme catalyses 1,2-dihydroxy-5-(methylsulfanyl)pent-1-en-3-one + O2 = 3-(methylsulfanyl)propanoate + CO + formate + 2 H(+). It catalyses the reaction 1,2-dihydroxy-5-(methylsulfanyl)pent-1-en-3-one + O2 = 4-methylsulfanyl-2-oxobutanoate + formate + 2 H(+). The protein operates within amino-acid biosynthesis; L-methionine biosynthesis via salvage pathway; L-methionine from S-methyl-5-thio-alpha-D-ribose 1-phosphate: step 5/6. In terms of biological role, catalyzes 2 different reactions between oxygen and the acireductone 1,2-dihydroxy-3-keto-5-methylthiopentene (DHK-MTPene) depending upon the metal bound in the active site. Fe-containing acireductone dioxygenase (Fe-ARD) produces formate and 2-keto-4-methylthiobutyrate (KMTB), the alpha-ketoacid precursor of methionine in the methionine recycle pathway. Ni-containing acireductone dioxygenase (Ni-ARD) produces methylthiopropionate, carbon monoxide and formate, and does not lie on the methionine recycle pathway. The protein is Acireductone dioxygenase of Bacillus pumilus (strain SAFR-032).